The sequence spans 152 residues: MKKEKDDNLIAQNKKARHDYFIKETVEAGIALTGTEIKSVRARRINLRDGYVQIYGGSAYLENVHISEYKQGNRYNHDPLRSRRLLLHKKEIARLAKAQSERGIAIIPLKVYLKHGFAKVLIGVGQGKKEYDKRQTIKERDQKREIRRKYGI.

Belongs to the SmpB family.

It is found in the cytoplasm. Functionally, required for rescue of stalled ribosomes mediated by trans-translation. Binds to transfer-messenger RNA (tmRNA), required for stable association of tmRNA with ribosomes. tmRNA and SmpB together mimic tRNA shape, replacing the anticodon stem-loop with SmpB. tmRNA is encoded by the ssrA gene; the 2 termini fold to resemble tRNA(Ala) and it encodes a 'tag peptide', a short internal open reading frame. During trans-translation Ala-aminoacylated tmRNA acts like a tRNA, entering the A-site of stalled ribosomes, displacing the stalled mRNA. The ribosome then switches to translate the ORF on the tmRNA; the nascent peptide is terminated with the 'tag peptide' encoded by the tmRNA and targeted for degradation. The ribosome is freed to recommence translation, which seems to be the essential function of trans-translation. This Lactobacillus helveticus (strain DPC 4571) protein is SsrA-binding protein.